We begin with the raw amino-acid sequence, 512 residues long: 2-isopropylmalate synthase (512 aa).

In terms of domain architecture, Pyruvate carboxyltransferase spans 4-266 (IQFFDTTLRD…ETNIVLNQFK (263 aa)). Aspartate 13, histidine 201, histidine 203, and asparagine 237 together coordinate Mn(2+). A regulatory domain region spans residues 390–512 (ELKHLQVQYV…SKQADFEEVK (123 aa)).

This sequence belongs to the alpha-IPM synthase/homocitrate synthase family. LeuA type 1 subfamily. In terms of assembly, homodimer. Mn(2+) is required as a cofactor.

It is found in the cytoplasm. It carries out the reaction 3-methyl-2-oxobutanoate + acetyl-CoA + H2O = (2S)-2-isopropylmalate + CoA + H(+). It functions in the pathway amino-acid biosynthesis; L-leucine biosynthesis; L-leucine from 3-methyl-2-oxobutanoate: step 1/4. Its function is as follows. Catalyzes the condensation of the acetyl group of acetyl-CoA with 3-methyl-2-oxobutanoate (2-ketoisovalerate) to form 3-carboxy-3-hydroxy-4-methylpentanoate (2-isopropylmalate). The polypeptide is 2-isopropylmalate synthase (Listeria innocua serovar 6a (strain ATCC BAA-680 / CLIP 11262)).